Consider the following 494-residue polypeptide: Nuclear distribution protein PAC1 (494 aa).

In terms of domain architecture, LisH spans Gln14–Arg46. Residues Asn90–Leu123 adopt a coiled-coil conformation. 7 WD repeats span residues Asn153–Ala192, Ser196–Gln244, Gly251–Thr292, Pro295–Thr334, His347–His395, Gly415–Glu454, and His457–Phe492.

It belongs to the WD repeat LIS1/nudF family. As to quaternary structure, self-associates. Interacts with NDL1 and dynein.

The protein localises to the cytoplasm. The protein resides in the cytoskeleton. Its subcellular location is the spindle pole. In terms of biological role, positively regulates the activity of the minus-end directed microtubule motor protein dynein. Plays a central role in positioning the mitotic spindle at the bud neck during cell division. Targets cytoplasmic dynein to microtubule plus ends, thereby promoting dynein-mediated microtubule sliding along the bud cortex and consequently the movement of the mitotic spindle to the bud neck. This chain is Nuclear distribution protein PAC1, found in Saccharomyces cerevisiae (strain RM11-1a) (Baker's yeast).